The sequence spans 78 residues: Large ribosomal subunit protein bL31 (78 aa).

Positions 16, 18, 38, and 41 each coordinate Zn(2+).

It belongs to the bacterial ribosomal protein bL31 family. Type A subfamily. Part of the 50S ribosomal subunit. Zn(2+) serves as cofactor.

Functionally, binds the 23S rRNA. The chain is Large ribosomal subunit protein bL31 from Frankia casuarinae (strain DSM 45818 / CECT 9043 / HFP020203 / CcI3).